Reading from the N-terminus, the 181-residue chain is Coatomer subunit zeta-3 (181 aa).

It belongs to the adaptor complexes small subunit family. As to quaternary structure, oligomeric complex that consists of at least the alpha, beta, beta', gamma, delta, epsilon and zeta subunits.

It is found in the cytoplasm. It localises to the golgi apparatus membrane. The protein resides in the cytoplasmic vesicle. Its subcellular location is the COPI-coated vesicle membrane. In terms of biological role, the coatomer is a cytosolic protein complex that binds to dilysine motifs and reversibly associates with Golgi non-clathrin-coated vesicles, which further mediate biosynthetic protein transport from the ER, via the Golgi up to the trans Golgi network. Coatomer complex is required for budding from Golgi membranes, and is essential for the retrograde Golgi-to-ER transport of dilysine-tagged proteins. The zeta subunit may be involved in regulating the coat assembly and, hence, the rate of biosynthetic protein transport due to its association-dissociation properties with the coatomer complex. The sequence is that of Coatomer subunit zeta-3 from Arabidopsis thaliana (Mouse-ear cress).